Consider the following 144-residue polypeptide: Macromomycin (144 aa).

The N-terminal stretch at 1-32 is a signal peptide; the sequence is MLQNTSRFLARAGATVGVAAGLAFSLPADRDG. Disulfide bonds link Cys68/Cys78 and Cys120/Cys125.

The protein belongs to the neocarzinostatin family.

In terms of biological role, binds non-covalently to a chromophore which is the cytotoxic and mutagenic component of the antibiotic. The chromophore binds to DNA as a weak intercalator and causes single- and double-strand breaks. This Streptomyces macromomyceticus protein is Macromomycin.